The primary structure comprises 308 residues: Nodulation protein D 1 (308 aa).

The 58-residue stretch at 6 to 63 (LDLNLLVALDALMTERNLTAAARSINLSQPAMSAAVGRLRVYFEDELFTMNGRELVLT) folds into the HTH lysR-type domain. A DNA-binding region (H-T-H motif) is located at residues 23-42 (LTAAARSINLSQPAMSAAVG).

Belongs to the LysR transcriptional regulatory family.

Functionally, nodD regulates the expression of the nodABCFE genes which encode other nodulation proteins. NodD is also a negative regulator of its own expression. Binds flavonoids as inducers. This is Nodulation protein D 1 (nodD1) from Rhizobium tropici.